A 539-amino-acid chain; its full sequence is Glucans biosynthesis protein D (539 aa).

The segment at residues 1-31 (MHRRNLLKASMALAAYTGLSASGLLAARAWA) is a signal peptide (tat-type signal).

Belongs to the OpgD/OpgG family. Post-translationally, predicted to be exported by the Tat system. The position of the signal peptide cleavage has not been experimentally proven.

The protein localises to the periplasm. It participates in glycan metabolism; osmoregulated periplasmic glucan (OPG) biosynthesis. In terms of biological role, probably involved in the control of the structural glucose backbone of osmoregulated periplasmic glucans (OPGs). The polypeptide is Glucans biosynthesis protein D (Pseudomonas fluorescens (strain ATCC BAA-477 / NRRL B-23932 / Pf-5)).